Consider the following 360-residue polypeptide: DNA replication and repair protein RecF (360 aa).

33-40 (GENGSGKT) contacts ATP.

This sequence belongs to the RecF family.

The protein localises to the cytoplasm. Its function is as follows. The RecF protein is involved in DNA metabolism; it is required for DNA replication and normal SOS inducibility. RecF binds preferentially to single-stranded, linear DNA. It also seems to bind ATP. The sequence is that of DNA replication and repair protein RecF from Rickettsia africae (strain ESF-5).